We begin with the raw amino-acid sequence, 183 residues long: MSIKSDRWIREQALKGMIEPFSEKQVREGVISYGLSSYGYDLRVSNEFKIFTNVNSAIIDPKNFDERSFVTVEADSVIVPPNSFALARSIEYFRIPRDVLTICVGKSTYARCGIIVNVTPFEPEWEGYVTLEISNTTPLPAKVYANEGLCQILFFQGDEPCEISYADKKGKYQNQQGIVLPKL.

DCTP is bound by residues 106–111 (KSTYAR), 130–132 (TLE), Gln-151, Tyr-165, and Gln-175. The active-site Proton donor/acceptor is the Glu-132.

This sequence belongs to the dCTP deaminase family. Homotrimer.

The enzyme catalyses dCTP + H2O + H(+) = dUTP + NH4(+). It functions in the pathway pyrimidine metabolism; dUMP biosynthesis; dUMP from dCTP (dUTP route): step 1/2. In terms of biological role, catalyzes the deamination of dCTP to dUTP. This Acidobacterium capsulatum (strain ATCC 51196 / DSM 11244 / BCRC 80197 / JCM 7670 / NBRC 15755 / NCIMB 13165 / 161) protein is dCTP deaminase.